The sequence spans 40 residues: Photosystem II reaction center protein J (40 aa).

A helical transmembrane segment spans residues 8 to 28 (IPLWIIGTVAGILVIGLIGIF).

This sequence belongs to the PsbJ family. As to quaternary structure, PSII is composed of 1 copy each of membrane proteins PsbA, PsbB, PsbC, PsbD, PsbE, PsbF, PsbH, PsbI, PsbJ, PsbK, PsbL, PsbM, PsbT, PsbX, PsbY, PsbZ, Psb30/Ycf12, at least 3 peripheral proteins of the oxygen-evolving complex and a large number of cofactors. It forms dimeric complexes.

It localises to the plastid. The protein localises to the chloroplast thylakoid membrane. Its function is as follows. One of the components of the core complex of photosystem II (PSII). PSII is a light-driven water:plastoquinone oxidoreductase that uses light energy to abstract electrons from H(2)O, generating O(2) and a proton gradient subsequently used for ATP formation. It consists of a core antenna complex that captures photons, and an electron transfer chain that converts photonic excitation into a charge separation. In Nicotiana sylvestris (Wood tobacco), this protein is Photosystem II reaction center protein J.